The following is a 191-amino-acid chain: MASFSTNEFKAGLKVMYDGNPCAIIDNEFVKPGKGQAFNRVKLRNLRTGKVLEQTFKSGESLEGADVVDTEMNYLYNDGEFWHFMHPETFEQLQADANAMADAKQWLKENGNDLCTITLFNGVPLSVTAPNFVELEIVETDPGVRGDTSGGGGKPARLETGAVVRVPLFVQQNEVVRVDTRTGDYQTRVSQ.

N6-(3,6-diaminohexanoyl)-5-hydroxylysine is present on K34.

The protein belongs to the elongation factor P family. Post-translationally, may be beta-lysylated on the epsilon-amino group of Lys-34 by the combined action of EpmA and EpmB, and then hydroxylated on the C5 position of the same residue by EpmC (if this protein is present). Lysylation is critical for the stimulatory effect of EF-P on peptide-bond formation. The lysylation moiety may extend toward the peptidyltransferase center and stabilize the terminal 3-CCA end of the tRNA. Hydroxylation of the C5 position on Lys-34 may allow additional potential stabilizing hydrogen-bond interactions with the P-tRNA.

The protein localises to the cytoplasm. Its pathway is protein biosynthesis; polypeptide chain elongation. Functionally, involved in peptide bond synthesis. Alleviates ribosome stalling that occurs when 3 or more consecutive Pro residues or the sequence PPG is present in a protein, possibly by augmenting the peptidyl transferase activity of the ribosome. Modification of Lys-34 is required for alleviation. This is Elongation factor P from Psychrobacter sp. (strain PRwf-1).